The chain runs to 502 residues: T-complex protein 11-like X-linked protein 1 (502 aa).

A disordered region spans residues 1–36 (MPKTEETVLQNDPSVAENGAPEPKTPGQSQKSKSFC).

Belongs to the TCP11 family.

This Homo sapiens (Human) protein is T-complex protein 11-like X-linked protein 1.